The primary structure comprises 84 residues: Small ribosomal subunit protein uS17 (84 aa).

Belongs to the universal ribosomal protein uS17 family. Part of the 30S ribosomal subunit.

Its function is as follows. One of the primary rRNA binding proteins, it binds specifically to the 5'-end of 16S ribosomal RNA. This chain is Small ribosomal subunit protein uS17, found in Vibrio atlanticus (strain LGP32) (Vibrio splendidus (strain Mel32)).